A 168-amino-acid chain; its full sequence is Large ribosomal subunit protein uL10 (168 aa).

It belongs to the universal ribosomal protein uL10 family. As to quaternary structure, part of the ribosomal stalk of the 50S ribosomal subunit. The N-terminus interacts with L11 and the large rRNA to form the base of the stalk. The C-terminus forms an elongated spine to which L12 dimers bind in a sequential fashion forming a multimeric L10(L12)X complex.

In terms of biological role, forms part of the ribosomal stalk, playing a central role in the interaction of the ribosome with GTP-bound translation factors. This Acinetobacter baumannii (strain AB307-0294) protein is Large ribosomal subunit protein uL10.